Reading from the N-terminus, the 419-residue chain is 3-isopropylmalate dehydratase large subunit (419 aa).

C300, C360, and C363 together coordinate [4Fe-4S] cluster.

The protein belongs to the aconitase/IPM isomerase family. LeuC type 2 subfamily. In terms of assembly, heterodimer of LeuC and LeuD. It depends on [4Fe-4S] cluster as a cofactor.

It catalyses the reaction (2R,3S)-3-isopropylmalate = (2S)-2-isopropylmalate. Its pathway is amino-acid biosynthesis; L-leucine biosynthesis; L-leucine from 3-methyl-2-oxobutanoate: step 2/4. Functionally, catalyzes the isomerization between 2-isopropylmalate and 3-isopropylmalate, via the formation of 2-isopropylmaleate. This is 3-isopropylmalate dehydratase large subunit from Desulfatibacillum aliphaticivorans.